Reading from the N-terminus, the 511-residue chain is Bifunctional purine biosynthesis protein PurH (511 aa).

Residues 1-147 enclose the MGS-like domain; sequence MIQIKRALIS…KNYKHTLVLT (147 aa).

The protein belongs to the PurH family.

It carries out the reaction (6R)-10-formyltetrahydrofolate + 5-amino-1-(5-phospho-beta-D-ribosyl)imidazole-4-carboxamide = 5-formamido-1-(5-phospho-D-ribosyl)imidazole-4-carboxamide + (6S)-5,6,7,8-tetrahydrofolate. The enzyme catalyses IMP + H2O = 5-formamido-1-(5-phospho-D-ribosyl)imidazole-4-carboxamide. Its pathway is purine metabolism; IMP biosynthesis via de novo pathway; 5-formamido-1-(5-phospho-D-ribosyl)imidazole-4-carboxamide from 5-amino-1-(5-phospho-D-ribosyl)imidazole-4-carboxamide (10-formyl THF route): step 1/1. It functions in the pathway purine metabolism; IMP biosynthesis via de novo pathway; IMP from 5-formamido-1-(5-phospho-D-ribosyl)imidazole-4-carboxamide: step 1/1. This is Bifunctional purine biosynthesis protein PurH from Leptospira borgpetersenii serovar Hardjo-bovis (strain JB197).